The following is a 391-amino-acid chain: Putative alpha-ketoglutarate-dependent sulfonate dioxygenase (391 aa).

The Fe cation site is built by H204 and D206. Positions 231 and 338 each coordinate 2-oxoglutarate. H353 is a binding site for Fe cation. Positions 364 and 368 each coordinate 2-oxoglutarate.

It belongs to the TfdA dioxygenase family. It depends on Fe(2+) as a cofactor.

It participates in organosulfur degradation; alkanesulfonate degradation. Acts as an alpha-ketoglutarate-dependent dioxygenase active on sulfonates. This Schizosaccharomyces pombe (strain 972 / ATCC 24843) (Fission yeast) protein is Putative alpha-ketoglutarate-dependent sulfonate dioxygenase.